Here is a 471-residue protein sequence, read N- to C-terminus: Histone deacetylase 6 (471 aa).

An N-acetylmethionine modification is found at M1. Residues 20-333 (RVSYFYEPTI…WCYETAVAVG (314 aa)) form a histone deacetylase region. H153 (proton donor/acceptor) is an active-site residue. Residues D188, H190, and D276 each contribute to the Zn(2+) site. The interval 389 to 471 (PSVQFQHTPP…PEPDVNPPSS (83 aa)) is disordered. Residues 453-463 (GEDEMDDDNPE) show a composition bias toward acidic residues.

This sequence belongs to the histone deacetylase family. HD type 1 subfamily. As to quaternary structure, interacts with Coi1, which functions in an SCF complex that recruits regulators for ubiquitination. Interacts with AHL22. Interacts with AS1. Part of the AS1 repressor complex composed of AS1, LBD6/AS2 and HDA6. Binds to EBS and SHL. Interacts with MBD6. Interacts with HDA5. Interacts with FLD. The cofactor is Zn(2+). In terms of tissue distribution, not detected in leaves, stems, flowers and young siliques.

It localises to the nucleus. The protein localises to the nucleolus. The enzyme catalyses N(6)-acetyl-L-lysyl-[histone] + H2O = L-lysyl-[histone] + acetate. With respect to regulation, inhibited by trichostatin A. In terms of biological role, responsible for the deacetylation of lysine residues on the N-terminal part of the core histones (H2A, H2B, H3 and H4). Might remove acetyl residues only from specific targets, such as rDNA repeats or complex transgenes. Histone deacetylation gives a tag for epigenetic repression and plays an important role in transcriptional regulation, cell cycle progression and developmental events. Histone deacetylases act via the formation of large multiprotein complexes. Required for rRNA gene silencing in nucleolar dominance. Plays a role in transgene silencing, but this effect seems to bee independent of the histone deacetylase activity. Part of the AS1 repressor complex to regulate the KNOX expression in leaf development. Binds to KNAT1, KNAT2, and KNATM chromatin. Involved in the regulation of flowering time. Forms a histone deacetylase complex with HDA5, FLD and MSI4/FVE that represses FLC gene expression to control flowering time. The chain is Histone deacetylase 6 from Arabidopsis thaliana (Mouse-ear cress).